The chain runs to 123 residues: Large ribosomal subunit protein uL14 (123 aa).

The protein belongs to the universal ribosomal protein uL14 family. In terms of assembly, part of the 50S ribosomal subunit. Forms a cluster with proteins L3 and L19. In the 70S ribosome, L14 and L19 interact and together make contacts with the 16S rRNA in bridges B5 and B8.

In terms of biological role, binds to 23S rRNA. Forms part of two intersubunit bridges in the 70S ribosome. This is Large ribosomal subunit protein uL14 from Zymomonas mobilis subsp. mobilis (strain ATCC 31821 / ZM4 / CP4).